A 687-amino-acid polypeptide reads, in one-letter code: Putative mitochondrial carnitine O-acetyltransferase (687 aa).

The active-site Proton acceptor is the H346. CoA is bound at residue 446–459; that stretch reads GASHIKTVFKCSPD. (R)-carnitine contacts are provided by Y481 and T494. At S517 the chain carries Phosphoserine.

This sequence belongs to the carnitine/choline acetyltransferase family.

Its subcellular location is the mitochondrion inner membrane. The catalysed reaction is (R)-carnitine + acetyl-CoA = O-acetyl-(R)-carnitine + CoA. Its function is as follows. Involved in the transfer of acetyl-CoA into mitochondria. May also be involved in the metabolism of acetate and of ethanol. The protein is Putative mitochondrial carnitine O-acetyltransferase (YAT1) of Saccharomyces cerevisiae (strain ATCC 204508 / S288c) (Baker's yeast).